The following is a 293-amino-acid chain: Pyridoxal 5'-phosphate synthase subunit PdxS (293 aa).

D-ribose 5-phosphate is bound at residue aspartate 23. The Schiff-base intermediate with D-ribose 5-phosphate role is filled by lysine 80. A D-ribose 5-phosphate-binding site is contributed by glycine 152. Arginine 164 contacts D-glyceraldehyde 3-phosphate. D-ribose 5-phosphate contacts are provided by residues glycine 213 and glycine 234–serine 235.

The protein belongs to the PdxS/SNZ family. In the presence of PdxT, forms a dodecamer of heterodimers.

The enzyme catalyses aldehydo-D-ribose 5-phosphate + D-glyceraldehyde 3-phosphate + L-glutamine = pyridoxal 5'-phosphate + L-glutamate + phosphate + 3 H2O + H(+). It participates in cofactor biosynthesis; pyridoxal 5'-phosphate biosynthesis. Its function is as follows. Catalyzes the formation of pyridoxal 5'-phosphate from ribose 5-phosphate (RBP), glyceraldehyde 3-phosphate (G3P) and ammonia. The ammonia is provided by the PdxT subunit. Can also use ribulose 5-phosphate and dihydroxyacetone phosphate as substrates, resulting from enzyme-catalyzed isomerization of RBP and G3P, respectively. In Thermus thermophilus (strain ATCC BAA-163 / DSM 7039 / HB27), this protein is Pyridoxal 5'-phosphate synthase subunit PdxS.